The sequence spans 246 residues: Indole-3-glycerol phosphate synthase (246 aa).

The protein belongs to the TrpC family.

The enzyme catalyses 1-(2-carboxyphenylamino)-1-deoxy-D-ribulose 5-phosphate + H(+) = (1S,2R)-1-C-(indol-3-yl)glycerol 3-phosphate + CO2 + H2O. The protein operates within amino-acid biosynthesis; L-tryptophan biosynthesis; L-tryptophan from chorismate: step 4/5. The protein is Indole-3-glycerol phosphate synthase of Sulfurisphaera tokodaii (strain DSM 16993 / JCM 10545 / NBRC 100140 / 7) (Sulfolobus tokodaii).